The following is a 205-amino-acid chain: Probable peptidyl-tRNA hydrolase 2 (205 aa).

Polar residues predominate over residues 40 to 49 (YSSKNANKAS). The tract at residues 40–68 (YSSKNANKASNPEKESPVSVSNDEDSESE) is disordered. Serine 65 and serine 79 each carry phosphoserine.

It belongs to the PTH2 family.

It carries out the reaction an N-acyl-L-alpha-aminoacyl-tRNA + H2O = an N-acyl-L-amino acid + a tRNA + H(+). In terms of biological role, the natural substrate for this enzyme may be peptidyl-tRNAs which drop off the ribosome during protein synthesis. The chain is Probable peptidyl-tRNA hydrolase 2 from Schizosaccharomyces pombe (strain 972 / ATCC 24843) (Fission yeast).